The sequence spans 427 residues: Phosphoribosylamine--glycine ligase (427 aa).

Positions 110-315 (KDFCQRHGLP…IVPILLAAAK (206 aa)) constitute an ATP-grasp domain. Position 136 to 196 (136 to 196 (LDTLEAPFVI…EEFMHGEEAS (61 aa))) interacts with ATP. Mg(2+)-binding residues include Glu285 and Asn287.

This sequence belongs to the GARS family. Mg(2+) serves as cofactor. The cofactor is Mn(2+).

The enzyme catalyses 5-phospho-beta-D-ribosylamine + glycine + ATP = N(1)-(5-phospho-beta-D-ribosyl)glycinamide + ADP + phosphate + H(+). The protein operates within purine metabolism; IMP biosynthesis via de novo pathway; N(1)-(5-phospho-D-ribosyl)glycinamide from 5-phospho-alpha-D-ribose 1-diphosphate: step 2/2. The polypeptide is Phosphoribosylamine--glycine ligase (Caulobacter vibrioides (strain ATCC 19089 / CIP 103742 / CB 15) (Caulobacter crescentus)).